A 1120-amino-acid polypeptide reads, in one-letter code: ISWI chromatin-remodeling complex ATPase ISW2 (1120 aa).

Residues Met1–Lys16 are compositionally biased toward basic and acidic residues. 2 disordered regions span residues Met1 to Arg58 and Leu129 to Glu153. A phosphoserine mark is found at Ser17 and Ser19. Over residues Leu47 to Arg58 the composition is skewed to basic and acidic residues. Positions Ile196 to Asp361 constitute a Helicase ATP-binding domain. An ATP-binding site is contributed by Asp209–Thr216. Residues Asp312–His315 carry the DEAH box motif. Positions Ile494–Lys645 constitute a Helicase C-terminal domain. Disordered regions lie at residues Gly764 to Pro783 and Asn828 to Glu853. The residue at position 831 (Ser831) is a Phosphoserine. The 53-residue stretch at Lys886–Lys938 folds into the SANT domain. Residues Pro1062 to Ala1120 are disordered. Thr1079 bears the Phosphothreonine mark. Polar residues predominate over residues Pro1080 to Lys1104. The residue at position 1082 (Ser1082) is a Phosphoserine. Over residues Asp1105–Ala1120 the composition is skewed to basic and acidic residues.

The protein belongs to the SNF2/RAD54 helicase family. ISWI subfamily. As to quaternary structure, component of the ISW2 complex, which at least consists of ISW2, ITC1, DLS1 and DPB4. May form a stable subcomplex with ITC1.

The protein resides in the nucleus. Its function is as follows. Catalytic component of the ISW2 complex, which acts in remodeling the chromatin by catalyzing an ATP-dependent alteration in the structure of nucleosomal DNA. The ISW2 complex is involved in coordinating transcriptional repression and in inheritance of telomeric silencing. It is involved in repression of MAT a-specific genes, INO1, and early meiotic genes during mitotic growth dependent upon transcription factor UME6 and in a parallel pathway to the RPD3-SIN3 histone deacetylase complex. This Saccharomyces cerevisiae (strain ATCC 204508 / S288c) (Baker's yeast) protein is ISWI chromatin-remodeling complex ATPase ISW2 (ISW2).